The sequence spans 275 residues: Uroplakin-3b (275 aa).

The first 26 residues, 1–26 (MVRTRWQPPLRALLLLVLVWLPQSLS), serve as a signal peptide directing secretion. At 27–196 (LDLIAYVPQI…DTWPGRRSGC (170 aa)) the chain is on the lumenal side. Residue Asn-77 is glycosylated (N-linked (GlcNAc...) asparagine). The chain crosses the membrane as a helical span at residues 197-217 (MIVITSILSALAGLLLLAFLA). The Cytoplasmic portion of the chain corresponds to 218–275 (ASTTRFSSLWWPEEAPEQLRIGSFMGKRYMTHHIPPSEAATLPVGCEPGLDPLPSLSP).

It belongs to the uroplakin-3 family. Heterodimer with uroplakin-1B (UPK1B). Expression is urothelium-specific.

Its subcellular location is the cell membrane. Component of the asymmetric unit membrane (AUM); a highly specialized biomembrane elaborated by terminally differentiated urothelial cells. May play an important role in AUM-cytoskeleton interaction in terminally differentiated urothelial cells. It also contributes to the formation of urothelial glycocalyx which may play an important role in preventing bacterial adherence. The chain is Uroplakin-3b (Upk3b) from Mus musculus (Mouse).